Here is a 481-residue protein sequence, read N- to C-terminus: Protein PBN1 (481 aa).

The Lumenal portion of the chain corresponds to 1 to 451; that stretch reads MRQRTTIYNP…TTFDRVNNIT (451 aa). N-linked (GlcNAc...) asparagine glycans are attached at residues asparagine 22, asparagine 52, asparagine 72, asparagine 174, asparagine 206, asparagine 266, asparagine 290, asparagine 347, asparagine 360, and asparagine 449. Residues 452 to 472 form a helical membrane-spanning segment; it reads SLGLLIGVLMILYAISIRVFM. The Cytoplasmic segment spans residues 473–481; that stretch reads STTSKTKRD.

The protein belongs to the PIGX family.

Its subcellular location is the endoplasmic reticulum membrane. The protein operates within glycolipid biosynthesis; glycosylphosphatidylinositol-anchor biosynthesis. Functionally, required for proper folding and/or the stability of a subset of proteins in the endoplasmic reticulum. Component of glycosylphosphatidylinositol-mannosyltransferase 1 which transfers the first of the 4 mannoses in the GPI-anchor precursors during GPI-anchor biosynthesis. Probably acts by stabilizing the mannosyltransferase GPI14. The protein is Protein PBN1 (PBN1) of Candida albicans (strain SC5314 / ATCC MYA-2876) (Yeast).